A 406-amino-acid chain; its full sequence is S-adenosylmethionine synthase (406 aa).

Residue H17 coordinates ATP. Mg(2+) is bound at residue D19. E45 is a binding site for K(+). E58 and Q101 together coordinate L-methionine. The interval 101-111 (QSAEINQGVAR) is flexible loop. ATP is bound by residues 178–180 (DGK), D258, 264–265 (RK), A281, and K285. Position 258 (D258) interacts with L-methionine. An L-methionine-binding site is contributed by K289.

The protein belongs to the AdoMet synthase family. As to quaternary structure, homotetramer; dimer of dimers. Requires Mg(2+) as cofactor. K(+) serves as cofactor.

It localises to the cytoplasm. It catalyses the reaction L-methionine + ATP + H2O = S-adenosyl-L-methionine + phosphate + diphosphate. The protein operates within amino-acid biosynthesis; S-adenosyl-L-methionine biosynthesis; S-adenosyl-L-methionine from L-methionine: step 1/1. Functionally, catalyzes the formation of S-adenosylmethionine (AdoMet) from methionine and ATP. The overall synthetic reaction is composed of two sequential steps, AdoMet formation and the subsequent tripolyphosphate hydrolysis which occurs prior to release of AdoMet from the enzyme. This Bifidobacterium longum (strain NCC 2705) protein is S-adenosylmethionine synthase.